The sequence spans 65 residues: Large ribosomal subunit protein bL35 (65 aa).

The segment at 1 to 23 is disordered; that stretch reads MPKMKTHRGAAKRFKKTGTGKLK.

Belongs to the bacterial ribosomal protein bL35 family.

This Clostridium perfringens (strain ATCC 13124 / DSM 756 / JCM 1290 / NCIMB 6125 / NCTC 8237 / Type A) protein is Large ribosomal subunit protein bL35.